A 249-amino-acid chain; its full sequence is Phosphoribosylaminoimidazole-succinocarboxamide synthase (249 aa).

The protein belongs to the SAICAR synthetase family.

It catalyses the reaction 5-amino-1-(5-phospho-D-ribosyl)imidazole-4-carboxylate + L-aspartate + ATP = (2S)-2-[5-amino-1-(5-phospho-beta-D-ribosyl)imidazole-4-carboxamido]succinate + ADP + phosphate + 2 H(+). The protein operates within purine metabolism; IMP biosynthesis via de novo pathway; 5-amino-1-(5-phospho-D-ribosyl)imidazole-4-carboxamide from 5-amino-1-(5-phospho-D-ribosyl)imidazole-4-carboxylate: step 1/2. The chain is Phosphoribosylaminoimidazole-succinocarboxamide synthase from Roseiflexus castenholzii (strain DSM 13941 / HLO8).